The following is a 375-amino-acid chain: ATP phosphoribosyltransferase regulatory subunit (375 aa).

It belongs to the class-II aminoacyl-tRNA synthetase family. HisZ subfamily. As to quaternary structure, heteromultimer composed of HisG and HisZ subunits.

The protein resides in the cytoplasm. The protein operates within amino-acid biosynthesis; L-histidine biosynthesis; L-histidine from 5-phospho-alpha-D-ribose 1-diphosphate: step 1/9. Functionally, required for the first step of histidine biosynthesis. May allow the feedback regulation of ATP phosphoribosyltransferase activity by histidine. The sequence is that of ATP phosphoribosyltransferase regulatory subunit from Agrobacterium fabrum (strain C58 / ATCC 33970) (Agrobacterium tumefaciens (strain C58)).